Consider the following 352-residue polypeptide: Chorismate synthase (352 aa).

Position 48 (Arg48) interacts with NADP(+). FMN-binding positions include Arg125–Ser127, Asn238–Ala239, Gly278, Lys293–Ser297, and Arg319.

The protein belongs to the chorismate synthase family. Homotetramer. FMNH2 is required as a cofactor.

It carries out the reaction 5-O-(1-carboxyvinyl)-3-phosphoshikimate = chorismate + phosphate. It functions in the pathway metabolic intermediate biosynthesis; chorismate biosynthesis; chorismate from D-erythrose 4-phosphate and phosphoenolpyruvate: step 7/7. In terms of biological role, catalyzes the anti-1,4-elimination of the C-3 phosphate and the C-6 proR hydrogen from 5-enolpyruvylshikimate-3-phosphate (EPSP) to yield chorismate, which is the branch point compound that serves as the starting substrate for the three terminal pathways of aromatic amino acid biosynthesis. This reaction introduces a second double bond into the aromatic ring system. The protein is Chorismate synthase of Legionella pneumophila (strain Paris).